Reading from the N-terminus, the 354-residue chain is Probable L-ascorbate-6-phosphate lactonase UlaG (354 aa).

This sequence belongs to the UlaG family. A divalent metal cation is required as a cofactor.

It localises to the cytoplasm. It catalyses the reaction L-ascorbate 6-phosphate + H2O = 3-dehydro-L-gulonate 6-phosphate. The protein operates within cofactor degradation; L-ascorbate degradation; D-xylulose 5-phosphate from L-ascorbate: step 1/4. In terms of biological role, probably catalyzes the hydrolysis of L-ascorbate-6-P into 3-keto-L-gulonate-6-P. Is essential for L-ascorbate utilization under anaerobic conditions. This chain is Probable L-ascorbate-6-phosphate lactonase UlaG, found in Shigella boydii serotype 4 (strain Sb227).